The primary structure comprises 474 residues: B-cell CLL/lymphoma 6 member B protein (474 aa).

The region spanning 38–105 is the BTB domain; that stretch reads TDVTLLVGGQ…MYTSRLRLSP (68 aa). Disordered stretches follow at residues 144–190 and 210–249; these read PVEV…PDPK and GSLVGESSGQPCPQARLPSGDEACSSSSSSEEGTTPGLQS. Pro residues predominate over residues 150–160; that stretch reads PRPPTVAPPGS. The segment covering 162-172 has biased composition (basic and acidic residues); it reads RRSEGHPDPPT. Polar residues-rich tracts occupy residues 173–183, 210–220, and 240–249; these read ESRSCSQGSPS, GSLVGESSGQP, and EEGTTPGLQS. 5 C2H2-type zinc fingers span residues 323-345, 351-373, 379-401, 407-429, and 435-458; these read YKCQLCRSAFRYKGNLASHRTVH, YRCSICGARFNRPANLKTHSRIH, YKCETCGSRFVQVAHLRAHVLIH, YPCPTCGTRFRHLQTLKSHVRIH, and YHCDPCGLHFRHKSQLRLHLRQKH.

In terms of assembly, associates with BCL6 through the BTB domain. As to expression, ubiquitously expressed with higher expression found in heart and lung.

The protein resides in the nucleus. Its function is as follows. Acts as a sequence-specific transcriptional repressor in association with BCL6. Necessary for activation of naive T-cells to antigenic stimulation. May attenuate the regulatory effect of BCL6 on antigenic activation of naive CD4 T-cells by forming a heterodimer with BCL6. The protein is B-cell CLL/lymphoma 6 member B protein (Bcl6b) of Mus musculus (Mouse).